A 232-amino-acid polypeptide reads, in one-letter code: Flagellar L-ring protein (232 aa).

An N-terminal signal peptide occupies residues 1–21 (MQKNAAHTYAISSLLVLSLTG). Cys22 carries N-palmitoyl cysteine lipidation. A lipid anchor (S-diacylglycerol cysteine) is attached at Cys22.

It belongs to the FlgH family. In terms of assembly, the basal body constitutes a major portion of the flagellar organelle and consists of four rings (L,P,S, and M) mounted on a central rod.

Its subcellular location is the cell outer membrane. It localises to the bacterial flagellum basal body. In terms of biological role, assembles around the rod to form the L-ring and probably protects the motor/basal body from shearing forces during rotation. The protein is Flagellar L-ring protein of Shigella dysenteriae serotype 1 (strain Sd197).